The chain runs to 538 residues: Bifunctional purine biosynthesis protein PurH (538 aa).

Residues 8–158 (IPAPDKVKIR…KNHAYVTVVT (151 aa)) form the MGS-like domain.

It belongs to the PurH family.

The enzyme catalyses (6R)-10-formyltetrahydrofolate + 5-amino-1-(5-phospho-beta-D-ribosyl)imidazole-4-carboxamide = 5-formamido-1-(5-phospho-D-ribosyl)imidazole-4-carboxamide + (6S)-5,6,7,8-tetrahydrofolate. It catalyses the reaction IMP + H2O = 5-formamido-1-(5-phospho-D-ribosyl)imidazole-4-carboxamide. The protein operates within purine metabolism; IMP biosynthesis via de novo pathway; 5-formamido-1-(5-phospho-D-ribosyl)imidazole-4-carboxamide from 5-amino-1-(5-phospho-D-ribosyl)imidazole-4-carboxamide (10-formyl THF route): step 1/1. Its pathway is purine metabolism; IMP biosynthesis via de novo pathway; IMP from 5-formamido-1-(5-phospho-D-ribosyl)imidazole-4-carboxamide: step 1/1. This chain is Bifunctional purine biosynthesis protein PurH, found in Agrobacterium fabrum (strain C58 / ATCC 33970) (Agrobacterium tumefaciens (strain C58)).